The chain runs to 268 residues: 4-diphosphocytidyl-2-C-methyl-D-erythritol kinase (268 aa).

Lysine 9 is an active-site residue. Residue 88 to 98 (PPGAGLGGGSS) participates in ATP binding. The active site involves aspartate 130.

This sequence belongs to the GHMP kinase family. IspE subfamily.

It catalyses the reaction 4-CDP-2-C-methyl-D-erythritol + ATP = 4-CDP-2-C-methyl-D-erythritol 2-phosphate + ADP + H(+). The protein operates within isoprenoid biosynthesis; isopentenyl diphosphate biosynthesis via DXP pathway; isopentenyl diphosphate from 1-deoxy-D-xylulose 5-phosphate: step 3/6. Catalyzes the phosphorylation of the position 2 hydroxy group of 4-diphosphocytidyl-2C-methyl-D-erythritol. This is 4-diphosphocytidyl-2-C-methyl-D-erythritol kinase from Aquifex aeolicus (strain VF5).